Here is a 154-residue protein sequence, read N- to C-terminus: Putative pre-16S rRNA nuclease (154 aa).

It belongs to the YqgF nuclease family.

Its subcellular location is the cytoplasm. Its function is as follows. Could be a nuclease involved in processing of the 5'-end of pre-16S rRNA. The polypeptide is Putative pre-16S rRNA nuclease (Rickettsia rickettsii (strain Iowa)).